The primary structure comprises 60 residues: UPF0434 protein SG0997 (60 aa).

Belongs to the UPF0434 family.

The sequence is that of UPF0434 protein SG0997 from Sodalis glossinidius (strain morsitans).